The primary structure comprises 240 residues: uncharacterized protein (240 aa).

The segment at 93–160 (QEASGCTVGE…AGGGAAASGQ (68 aa)) is disordered. Low complexity-rich tracts occupy residues 110-119 (AQPSQPAQGG) and 129-150 (GGAE…PAEN).

This is an uncharacterized protein from Streptomyces viridochromogenes.